The following is a 494-amino-acid chain: Tripartite motif-containing protein 5 (494 aa).

Alanine 2 is subject to N-acetylalanine. The RING-type zinc finger occupies 15 to 59 (CPICLELLTEPLSLDCGHSFCQACITANHKESTPHQGERSCPLCR). Position 86 is a phosphoserine (serine 86). The segment at 91–132 (QKVGHCARHGEKLLLFCEQDGNVICWLCERSQEHRGHHTFLV) adopts a B box-type zinc-finger fold. The Zn(2+) site is built by cysteine 96, histidine 99, cysteine 118, and histidine 124. A coiled-coil region spans residues 131–223 (LVEEVAEKYQ…RLVQSESDMA (93 aa)). Residues 186-199 (FKQLRDILDCEESK) form a required for interaction with GABARAP and for autophagy region. Residues 280 to 494 (PDLKGMLQAF…LPMTLCSPSS (215 aa)) form the B30.2/SPRY domain.

It belongs to the TRIM/RBCC family. As to quaternary structure, can form homodimers and homotrimers. In addition to lower-order dimerization, also exhibits a higher-order multimerization and both low- and high-order multimerizations are essential for its restriction activity. Interacts with BTBD1 and BTBD2. Interacts with PSMC4, PSMC5, PSMD7 and HSPA8/HSC70. Interacts (via B30.2/SPRY domain) with HSPA1A/B. Interacts with PSMC2, MAP3K7/TAK1, TAB2 and TAB3. Interacts with SQSTM1. Interacts with TRIM6 and TRIM34. Interacts with ULK1 (phosphorylated form), GABARAP, GABARAPL1, GABARAPL2, MAP1LC3A, MAP1LC3C and BECN1. In terms of processing, degraded in a proteasome-independent fashion in the absence of viral infection but in a proteasome-dependent fashion following exposure to restriction sensitive virus. Post-translationally, autoubiquitinated in a RING finger- and UBE2D2-dependent manner. Monoubiquitinated by TRIM21. Deubiquitinated by Yersinia YopJ. Ubiquitination may not lead to proteasomal degradation.

The protein localises to the cytoplasm. It is found in the nucleus. It carries out the reaction S-ubiquitinyl-[E2 ubiquitin-conjugating enzyme]-L-cysteine + [acceptor protein]-L-lysine = [E2 ubiquitin-conjugating enzyme]-L-cysteine + N(6)-ubiquitinyl-[acceptor protein]-L-lysine.. It participates in protein modification; protein ubiquitination. Functionally, capsid-specific restriction factor that prevents infection from non-host-adapted retroviruses. Blocks viral replication early in the life cycle, after viral entry but before reverse transcription. In addition to acting as a capsid-specific restriction factor, also acts as a pattern recognition receptor that activates innate immune signaling in response to the retroviral capsid lattice. Binding to the viral capsid triggers its E3 ubiquitin ligase activity, and in concert with the heterodimeric ubiquitin conjugating enzyme complex UBE2V1-UBE2N (also known as UBC13-UEV1A complex) generates 'Lys-63'-linked polyubiquitin chains, which in turn are catalysts in the autophosphorylation of the MAP3K7/TAK1 complex (includes TAK1, TAB2, and TAB3). Activation of the MAP3K7/TAK1 complex by autophosphorylation results in the induction and expression of NF-kappa-B and MAPK-responsive inflammatory genes, thereby leading to an innate immune response in the infected cell. Plays a role in regulating autophagy through activation of autophagy regulator BECN1 by causing its dissociation from its inhibitors BCL2 and TAB2. The polypeptide is Tripartite motif-containing protein 5 (TRIM5) (Saguinus oedipus (Cotton-top tamarin)).